The primary structure comprises 433 residues: Tol-Pal system protein TolB (433 aa).

A signal peptide spans 1–21 (MRNLLRGMLVVICCMAGIAAA).

It belongs to the TolB family. As to quaternary structure, the Tol-Pal system is composed of five core proteins: the inner membrane proteins TolA, TolQ and TolR, the periplasmic protein TolB and the outer membrane protein Pal. They form a network linking the inner and outer membranes and the peptidoglycan layer.

It localises to the periplasm. In terms of biological role, part of the Tol-Pal system, which plays a role in outer membrane invagination during cell division and is important for maintaining outer membrane integrity. The protein is Tol-Pal system protein TolB of Pseudomonas fluorescens (strain ATCC BAA-477 / NRRL B-23932 / Pf-5).